The chain runs to 310 residues: Tyrosine recombinase XerC (310 aa).

Residues 22-103 (SQMLEAIEDF…SVKSFSTWAV (82 aa)) enclose the Core-binding (CB) domain. The 181-residue stretch at 124 to 304 (NLPRVLGEVQ…SSQRLLEAFR (181 aa)) folds into the Tyr recombinase domain. Residues arginine 165, lysine 189, histidine 256, arginine 259, and histidine 282 contribute to the active site. Tyrosine 291 acts as the O-(3'-phospho-DNA)-tyrosine intermediate in catalysis.

It belongs to the 'phage' integrase family. XerC subfamily. As to quaternary structure, forms a cyclic heterotetrameric complex composed of two molecules of XerC and two molecules of XerD.

The protein resides in the cytoplasm. Its function is as follows. Site-specific tyrosine recombinase, which acts by catalyzing the cutting and rejoining of the recombining DNA molecules. The XerC-XerD complex is essential to convert dimers of the bacterial chromosome into monomers to permit their segregation at cell division. It also contributes to the segregational stability of plasmids. This is Tyrosine recombinase XerC from Corynebacterium efficiens (strain DSM 44549 / YS-314 / AJ 12310 / JCM 11189 / NBRC 100395).